The primary structure comprises 149 residues: Endoribonuclease YbeY (149 aa).

Residues histidine 115, histidine 119, and histidine 125 each contribute to the Zn(2+) site.

This sequence belongs to the endoribonuclease YbeY family. Zn(2+) serves as cofactor.

It localises to the cytoplasm. In terms of biological role, single strand-specific metallo-endoribonuclease involved in late-stage 70S ribosome quality control and in maturation of the 3' terminus of the 16S rRNA. This is Endoribonuclease YbeY from Mycoplasmopsis pulmonis (strain UAB CTIP) (Mycoplasma pulmonis).